The chain runs to 350 residues: N-acetyl-gamma-glutamyl-phosphate reductase (350 aa).

The active site involves C153.

Belongs to the NAGSA dehydrogenase family. Type 1 subfamily.

The protein localises to the cytoplasm. It catalyses the reaction N-acetyl-L-glutamate 5-semialdehyde + phosphate + NADP(+) = N-acetyl-L-glutamyl 5-phosphate + NADPH + H(+). The protein operates within amino-acid biosynthesis; L-arginine biosynthesis; N(2)-acetyl-L-ornithine from L-glutamate: step 3/4. Its function is as follows. Catalyzes the NADPH-dependent reduction of N-acetyl-5-glutamyl phosphate to yield N-acetyl-L-glutamate 5-semialdehyde. This is N-acetyl-gamma-glutamyl-phosphate reductase from Gloeobacter violaceus (strain ATCC 29082 / PCC 7421).